A 103-amino-acid polypeptide reads, in one-letter code: NADH-quinone oxidoreductase subunit K 1 (103 aa).

Helical transmembrane passes span 7–27 (ISWF…GFLF), 31–51 (IITV…SFVT), and 63–83 (LFTF…LAII).

It belongs to the complex I subunit 4L family. NDH-1 is composed of 14 different subunits. Subunits NuoA, H, J, K, L, M, N constitute the membrane sector of the complex.

The protein resides in the cell inner membrane. It carries out the reaction a quinone + NADH + 5 H(+)(in) = a quinol + NAD(+) + 4 H(+)(out). Functionally, NDH-1 shuttles electrons from NADH, via FMN and iron-sulfur (Fe-S) centers, to quinones in the respiratory chain. The immediate electron acceptor for the enzyme in this species is believed to be ubiquinone. Couples the redox reaction to proton translocation (for every two electrons transferred, four hydrogen ions are translocated across the cytoplasmic membrane), and thus conserves the redox energy in a proton gradient. The protein is NADH-quinone oxidoreductase subunit K 1 of Solibacter usitatus (strain Ellin6076).